Here is a 436-residue protein sequence, read N- to C-terminus: Calcium/calmodulin-regulated receptor-like kinase 2 (436 aa).

A helical transmembrane segment spans residues 7–34 (LVVIGISVGLALGLLLALLLFFAIKWYY). The tract at residues 65 to 88 (DRANTESSQPPENGAPTQHQPWWN) is disordered. Residues 69–88 (TESSQPPENGAPTQHQPWWN) show a composition bias toward polar residues. The Protein kinase domain maps to 114-375 (QNFTTVLGQG…PSIGEVTQFI (262 aa)). ATP contacts are provided by residues 120-128 (LGQGSFGPV) and K142. Position 187 is a phosphotyrosine (Y187). D239 serves as the catalytic Proton acceptor. At T276 the chain carries Phosphothreonine. Y284 carries the post-translational modification Phosphotyrosine.

Belongs to the protein kinase superfamily. Ser/Thr protein kinase family.

It is found in the cell membrane. It catalyses the reaction L-seryl-[protein] + ATP = O-phospho-L-seryl-[protein] + ADP + H(+). It carries out the reaction L-threonyl-[protein] + ATP = O-phospho-L-threonyl-[protein] + ADP + H(+). The polypeptide is Calcium/calmodulin-regulated receptor-like kinase 2 (Arabidopsis thaliana (Mouse-ear cress)).